The following is a 155-amino-acid chain: SsrA-binding protein (155 aa).

This sequence belongs to the SmpB family.

The protein localises to the cytoplasm. Required for rescue of stalled ribosomes mediated by trans-translation. Binds to transfer-messenger RNA (tmRNA), required for stable association of tmRNA with ribosomes. tmRNA and SmpB together mimic tRNA shape, replacing the anticodon stem-loop with SmpB. tmRNA is encoded by the ssrA gene; the 2 termini fold to resemble tRNA(Ala) and it encodes a 'tag peptide', a short internal open reading frame. During trans-translation Ala-aminoacylated tmRNA acts like a tRNA, entering the A-site of stalled ribosomes, displacing the stalled mRNA. The ribosome then switches to translate the ORF on the tmRNA; the nascent peptide is terminated with the 'tag peptide' encoded by the tmRNA and targeted for degradation. The ribosome is freed to recommence translation, which seems to be the essential function of trans-translation. This is SsrA-binding protein from Streptococcus pneumoniae serotype 4 (strain ATCC BAA-334 / TIGR4).